A 215-amino-acid polypeptide reads, in one-letter code: Probable transaldolase (215 aa).

K83 acts as the Schiff-base intermediate with substrate in catalysis.

This sequence belongs to the transaldolase family. Type 3B subfamily.

It localises to the cytoplasm. It catalyses the reaction D-sedoheptulose 7-phosphate + D-glyceraldehyde 3-phosphate = D-erythrose 4-phosphate + beta-D-fructose 6-phosphate. It participates in carbohydrate degradation; pentose phosphate pathway; D-glyceraldehyde 3-phosphate and beta-D-fructose 6-phosphate from D-ribose 5-phosphate and D-xylulose 5-phosphate (non-oxidative stage): step 2/3. Its function is as follows. Transaldolase is important for the balance of metabolites in the pentose-phosphate pathway. The sequence is that of Probable transaldolase from Pelotomaculum thermopropionicum (strain DSM 13744 / JCM 10971 / SI).